A 560-amino-acid polypeptide reads, in one-letter code: MVKLNDEEGAAMAPGHQPTNGYLLVPGGEPPGKVSAELQNGPKAVCLTLNGVSRDSLAAAAEALCRPQTPLAPEEETQTRLLPTGPGEETPGTEGSPAPQTALSARRFVVLLIFSLYSLVNAFQWIQYSVISNVFEGFYGVSSLHIDWLSMVYMLAYVPLIFPATWLLDTRGLRLTALLGSGLNCLGAWVKCASVQQHLFWVTMLGQCLCSVAQVFILGLPSRIASVWFGPKEVSTACATAVLGNQLGAAIGFLLPPVLVPNTQNNTDLLACNISTMFYGTSSVATFLCFLTIIAFKEKPQYPPSQAQAALQNSPPAKYSYKKSIRNLFRNVPFVLLLITYGIITGAFYSVSTLLNQMILTYYKGEEVSAGKIGLTLVVAGMVGSILCGFWLDYTKIYKQTTLIVYILSFLGMVIFTFTLDLGYGIVVFVTGGVLGFFMTGYLPLGFEFAVEITYPESEGTSSGLLNAAAQIFGILFTLAQGKLTTDYSPKAGNIFLCVWLFLGIILTALIKSDLRRHNINIGIANGDIKAVPVEDTVEDSPTDKESKTIVMSKQSESAI.

The disordered stretch occupies residues M1–Y22. Residues M1 to P99 lie on the Cytoplasmic side of the membrane. S56 is modified (phosphoserine). Residues Q68–P99 form a disordered region. Positions P83–G95 are enriched in low complexity. Residues Q100–Q124 form a helical membrane-spanning segment. Residues W125 to S142 are Extracellular-facing. The helical transmembrane segment at S143–T170 threads the bilayer. Residues R171–G172 lie on the Cytoplasmic side of the membrane. Residues L173–C192 form a helical membrane-spanning segment. Topologically, residues A193–L199 are extracellular. The helical transmembrane segment at F200–W228 threads the bilayer. Q214 contacts ethanolamine. The Cytoplasmic segment spans residues F229–E233. A helical membrane pass occupies residues V234–L259. Topologically, residues V260–N265 are extracellular. N265 carries an N-linked (GlcNAc...) asparagine glycan. The chain crosses the membrane as a helical span at residues N266–A295. Residues F296–N331 lie on the Cytoplasmic side of the membrane. A helical membrane pass occupies residues V332 to Y362. Over Y363–E366 the chain is Extracellular. A helical membrane pass occupies residues E367–T395. Topologically, residues K396 to I397 are cytoplasmic. Residues Y398 to L420 form a helical membrane-spanning segment. The Extracellular segment spans residues D421–G423. Residues Y424–I453 form a helical membrane-spanning segment. Over T454–T461 the chain is Cytoplasmic. The chain crosses the membrane as a helical span at residues S462–D487. Q471 contacts ethanolamine. Q471 contributes to the choline binding site. Residues Y488–S489 are Extracellular-facing. Residues P490–K512 form a helical membrane-spanning segment. Over S513–I560 the chain is Cytoplasmic. Residues T537 to I560 are disordered. S541 is modified (phosphoserine). Residues I550 to I560 are compositionally biased toward polar residues.

Belongs to the major facilitator superfamily. Feline leukemia virus subgroup C receptor (TC 2.A.1.28.1) family.

It localises to the cell membrane. The enzyme catalyses choline(out) = choline(in). It catalyses the reaction ethanolamine(in) = ethanolamine(out). The catalysed reaction is heme b(in) = heme b(out). Its function is as follows. Uniporter that mediates the transport of extracellular choline and ethanolamine into cells, thereby playing a key role in phospholipid biosynthesis. Choline and ethanolamine are the precursors of phosphatidylcholine and phosphatidylethanolamine, respectively, the two most abundant phospholipids. Transport is not coupled with proton transport and is exclusively driven by the choline (or ethanolamine) gradient across the plasma membrane. Also acts as a heme b transporter that mediates heme efflux from the cytoplasm to the extracellular compartment. (Microbial infection) Confers susceptibility to Feline leukemia virus subgroup C (FeLV-C) infection, which is associated with fatal erythroid aplasia, also known as aplastic anemia. The polypeptide is Choline/ethanolamine transporter FLVCR1 (FLVCR1) (Felis catus (Cat)).